A 249-amino-acid polypeptide reads, in one-letter code: Tabinhibitin 4 (249 aa).

The N-terminal stretch at 1–23 is a signal peptide; the sequence is MTLNVYFVLLSPYSLQSVPLPLT. Residues 31-33 carry the Cell attachment site motif; it reads RGD. The region spanning 64–207 is the SCP domain; sequence LQKTNWLRGV…LKRALFTCNF (144 aa). The Cell attachment site signature appears at 220–222; it reads RGD.

This sequence belongs to the CRISP family. As to expression, expressed in salivary glands.

Its subcellular location is the secreted. Inhibits platelet aggregation induced by all agonists tested (ADP, arachidonic acid, the thromboxane A2 analog U46619, thrombin, and snake venom snaclecs (TMVA that activates platelet through GPIB, and stejnulxin that specifically acts through GPVI (GP6))). May act by competing with fibrinogen for binding to glycoprotein IIb/IIIa (ITGA2B/ITGB3). This Tabanus yao (Horsefly) protein is Tabinhibitin 4.